The primary structure comprises 463 residues: Putative WAS protein family homolog 3 (463 aa).

Residues 1–54 (MTPVRMQHSLAGQTYAVPLIQPDLRREEAVQQMADALQYLQKVSGDIFSRISQQ) form a required for WASH complex assembly region. A WHD1 region spans residues 1-165 (MTPVRMQHSL…EGLGGLPSNI (165 aa)). A Glycyl lysine isopeptide (Lys-Gly) (interchain with G-Cter in ubiquitin) cross-link involves residue K218. Residues 295–463 (QDGVLTPPPP…AEEDEDDWES (169 aa)) are disordered. Residues 300–312 (TPPPPPPPPPPAP) are compositionally biased toward pro residues. Positions 347–463 (QGAPREVVDP…AEEDEDDWES (117 aa)) are VCA. Residues 359 to 381 (GRATLLESIRQAGGIGKAKLRSM) form the WH2 domain. The span at 380–396 (SMKERKLEKKQQKEQEQ) shows a compositional bias: basic and acidic residues. Residues 422 to 434 (SGKGPGAGEGPGG) are compositionally biased toward gly residues. Acidic residues predominate over residues 454-463 (AEEDEDDWES).

The protein belongs to the WASH1 family. As to quaternary structure, component of the WASH core complex also described as WASH regulatory complex (SHRC) composed of WASH (WASHC1, WASH2P or WASH3P), WASHC2 (WASHC2A or WASHC2C), WASHC3, WASHC4 and WASHC5. The WASH core complex associates with the F-actin-capping protein dimer (formed by CAPZA1, CAPZA2 or CAPZA3 and CAPZB) in a transient or substoichiometric manner which was initially described as WASH complex. Interacts (via WHD1 region) with WASHC2C; the interaction is direct. Interacts with alpha-tubulin. Interacts with BECN1; WASHC1 and AMBRA1 can competitively interact with BECN1. Interacts with BLOC1S2; may associate with the BLOC-1 complex. Interacts with tubulin gamma chain (TUBG1 or TUBG2). Interacts with EXOC1, EXOC4, EXOC8; in MMP14-positive endosomes in breast tumor cells; indicative for an association with the exocyst complex.

Its subcellular location is the early endosome. It is found in the early endosome membrane. The protein localises to the recycling endosome membrane. It localises to the cell projection. The protein resides in the lamellipodium. Its subcellular location is the filopodium. It is found in the cytoplasmic vesicle. The protein localises to the autophagosome. It localises to the cytoplasm. The protein resides in the cytoskeleton. Its subcellular location is the microtubule organizing center. It is found in the centrosome. The protein localises to the centriole. Functionally, acts as a nucleation-promoting factor at the surface of endosomes, where it recruits and activates the Arp2/3 complex to induce actin polymerization, playing a key role in the fission of tubules that serve as transport intermediates during endosome sorting. Involved in endocytic trafficking of EGF. Involved in transferrin receptor recycling. Regulates the trafficking of endosomal alpha5beta1 integrin to the plasma membrane and involved in invasive cell migration. In T-cells involved in endosome-to-membrane recycling of receptors including T-cell receptor (TCR), CD28 and ITGAL; proposed to be implicated in T cell proliferation and effector function. In dendritic cells involved in endosome-to-membrane recycling of major histocompatibility complex (MHC) class II probably involving retromer and subsequently allowing antigen sampling, loading and presentation during T-cell activation. Involved in Arp2/3 complex-dependent actin assembly driving Salmonella typhimurium invasion independent of ruffling. Involved in the exocytosis of MMP14 leading to matrix remodeling during invasive migration and implicating late endosome-to-plasma membrane tubular connections and cooperation with the exocyst complex. Involved in negative regulation of autophagy independently from its role in endosomal sorting by inhibiting BECN1 ubiquitination to inactivate PIK3C3/Vps34 activity. This Homo sapiens (Human) protein is Putative WAS protein family homolog 3 (WASH3P).